The primary structure comprises 464 residues: Agamous-like MADS-box protein AGL92 (464 aa).

The MADS-box domain maps to 1–60 (MRTKTKLVLIPDRHFRRATFRKRNAGIRKKLHELTTLCDIKACAVIYSPFENPTVWPSTE). The stretch at 85–114 (ETFLRDQITKEQNKLESLRRENRETQLKHF) forms a coiled coil. The disordered stretch occupies residues 443-464 (TSTGHMPSTTTTTTNNNNNNNV). Residues 451–464 (TTTTTTNNNNNNNV) are compositionally biased toward low complexity.

Interacts with AGL62.

It localises to the nucleus. Putative transcription factor. In Arabidopsis thaliana (Mouse-ear cress), this protein is Agamous-like MADS-box protein AGL92 (AGL92).